The chain runs to 341 residues: Ribulose-5-phosphate reductase 2 (341 aa).

Zn(2+)-binding residues include C38, H64, E65, and E144.

This sequence belongs to the zinc-containing alcohol dehydrogenase family. In terms of assembly, heterodimer together with TarI. The cofactor is Zn(2+).

It catalyses the reaction D-ribitol 5-phosphate + NADP(+) = D-ribulose 5-phosphate + NADPH + H(+). The protein operates within cell wall biogenesis; poly(ribitol phosphate) teichoic acid biosynthesis. In terms of biological role, catalyzes the NADPH dependent reduction of D-ribulose 5-phosphate to D-ribitol 5-phosphate. The chain is Ribulose-5-phosphate reductase 2 from Staphylococcus aureus (strain NCTC 8325 / PS 47).